The following is a 410-amino-acid chain: Venom metalloproteinase 2 (410 aa).

An N-terminal signal peptide occupies residues 1-22; it reads MDTFILTYSILFLALFIESIHS. N-linked (GlcNAc...) asparagine glycans are attached at residues Asn-64, Asn-112, Asn-187, Asn-231, Asn-292, and Asn-307. Residues 214–410 form the Peptidase M12B domain; sequence FYPKLLVLVD…NNNVSKFIWS (197 aa). His-365 is a binding site for Zn(2+). Glu-366 is an active-site residue. Zn(2+) is bound by residues His-369 and His-375. Asn-403 carries an N-linked (GlcNAc...) asparagine glycan.

It in the C-terminal section; belongs to the venom metalloproteinase (M12B) family. In terms of assembly, monomer. Zn(2+) is required as a cofactor. In terms of tissue distribution, expressed by the venom gland.

The protein localises to the secreted. The gelatinase activity is inhibited by EDTA. Functionally, the recombinant protein has gelatinase activity. In vivo, injection of this recombinant into fifth instar L.oleracea (host) larvae results in partial insect mortality associated with the molt to sixth instar, with surviving insects showing retarded development and growth. The chain is Venom metalloproteinase 2 from Eulophus pennicornis (Parasitoid wasp).